Consider the following 162-residue polypeptide: SsrA-binding protein (162 aa).

The disordered stretch occupies residues 140–162 (DKRETAAKRDWSRQKSRLMKDHG).

This sequence belongs to the SmpB family.

The protein localises to the cytoplasm. Required for rescue of stalled ribosomes mediated by trans-translation. Binds to transfer-messenger RNA (tmRNA), required for stable association of tmRNA with ribosomes. tmRNA and SmpB together mimic tRNA shape, replacing the anticodon stem-loop with SmpB. tmRNA is encoded by the ssrA gene; the 2 termini fold to resemble tRNA(Ala) and it encodes a 'tag peptide', a short internal open reading frame. During trans-translation Ala-aminoacylated tmRNA acts like a tRNA, entering the A-site of stalled ribosomes, displacing the stalled mRNA. The ribosome then switches to translate the ORF on the tmRNA; the nascent peptide is terminated with the 'tag peptide' encoded by the tmRNA and targeted for degradation. The ribosome is freed to recommence translation, which seems to be the essential function of trans-translation. The protein is SsrA-binding protein of Roseobacter denitrificans (strain ATCC 33942 / OCh 114) (Erythrobacter sp. (strain OCh 114)).